The chain runs to 332 residues: MTSFLTAARTEQESISYDMQRLRLFSGTSNPALAREIAAYLGVPDGPRICKRFADGELYVQIQESIRGCDVFLIQPTCAPVNDNLMELLIMVDACQRASARQITAVVPYYGYARADRKTAGRESITAKLTANLLVKSGVNRVLAMDLHSAQIQGYFDIPCDHIYGSPVLVDYLAAQELNEVVVVSPDVGGVARARAFAKQMRDAPLAIIDKRRSGHNVAESLTVIGDVAGKTAILIDDMIDTGGTICSGARLLRQQGAKRVIACASHAVFSPPACERLSEEGLFEQVLVTNSIPIAAERHFPQLQVLSVANMLGEAIWRIHEESSVSSMFRG.

55 to 57 (DGE) contacts ATP. H148 and D187 together coordinate Mg(2+). K211 is a catalytic residue. Residues R213, D237, and 241–245 (DTGGT) each bind D-ribose 5-phosphate.

Belongs to the ribose-phosphate pyrophosphokinase family. Class I subfamily. In terms of assembly, homohexamer. Mg(2+) serves as cofactor.

It is found in the cytoplasm. The catalysed reaction is D-ribose 5-phosphate + ATP = 5-phospho-alpha-D-ribose 1-diphosphate + AMP + H(+). It participates in metabolic intermediate biosynthesis; 5-phospho-alpha-D-ribose 1-diphosphate biosynthesis; 5-phospho-alpha-D-ribose 1-diphosphate from D-ribose 5-phosphate (route I): step 1/1. Involved in the biosynthesis of the central metabolite phospho-alpha-D-ribosyl-1-pyrophosphate (PRPP) via the transfer of pyrophosphoryl group from ATP to 1-hydroxyl of ribose-5-phosphate (Rib-5-P). This is Ribose-phosphate pyrophosphokinase from Prochlorococcus marinus (strain MIT 9313).